Consider the following 356-residue polypeptide: Icosanoyl-CoA 5-desaturase (356 aa).

The chain crosses the membrane as a helical span at residues 5-25; that stretch reads LYFPISISLSLSLEAMASFIA. The disordered stretch occupies residues 38 to 58; it reads LDPKIPTKPEPKTETPKPKDD. Positions 42–58 are enriched in basic and acidic residues; it reads IPTKPEPKTETPKPKDD. 2 consecutive transmembrane segments (helical) span residues 88–108 and 111–131; these read NAVTLLVLHALAAMAPFYFSW and FWISFILLGFASGVLGITLCF. The Histidine box-1 motif lies at 132-137; sequence HRCLTH. The Histidine box-2 motif lies at 169-173; sequence HRYHH. A helical transmembrane segment spans residues 236-256; the sequence is ALIALLYYVGGFPYIVWGMGF. The short motif at 302–306 is the Histidine box-3 element; sequence HNNHH.

This sequence belongs to the fatty acid desaturase type 1 family. The cofactor is Fe(2+).

It is found in the membrane. The enzyme catalyses eicosanoyl-CoA + 2 Fe(II)-[cytochrome b5] + O2 + 2 H(+) = (5Z)-eicosenoyl-CoA + 2 Fe(III)-[cytochrome b5] + 2 H2O. It functions in the pathway lipid metabolism; monounsaturated fatty acid biosynthesis. Functionally, desaturase involved in the biosynthesis of (5Z)-icos-5-enoate, an unusual monounsaturated fatty acid that makes up to 60% of the total fatty acids in Limnanthes sp. seed oil. Only acts on saturated fatty acids. This Limnanthes douglasii (Douglas' meadowfoam) protein is Icosanoyl-CoA 5-desaturase.